The following is a 302-amino-acid chain: 4-hydroxy-tetrahydrodipicolinate synthase (302 aa).

Residue threonine 55 participates in pyruvate binding. Catalysis depends on tyrosine 144, which acts as the Proton donor/acceptor. Lysine 172 functions as the Schiff-base intermediate with substrate in the catalytic mechanism. Position 214 (valine 214) interacts with pyruvate.

It belongs to the DapA family. Homotetramer; dimer of dimers.

The protein localises to the cytoplasm. It carries out the reaction L-aspartate 4-semialdehyde + pyruvate = (2S,4S)-4-hydroxy-2,3,4,5-tetrahydrodipicolinate + H2O + H(+). It functions in the pathway amino-acid biosynthesis; L-lysine biosynthesis via DAP pathway; (S)-tetrahydrodipicolinate from L-aspartate: step 3/4. Catalyzes the condensation of (S)-aspartate-beta-semialdehyde [(S)-ASA] and pyruvate to 4-hydroxy-tetrahydrodipicolinate (HTPA). This chain is 4-hydroxy-tetrahydrodipicolinate synthase, found in Synechococcus sp. (strain CC9311).